The following is a 263-amino-acid chain: MPEGPEIRRAADNLEAAIKGKPLTDVWFAFAQLKPYESQLTGQIVTRIETRGKALLTHFSNGLTLYSHNQLYGVWRVIDTGEIPQTTRILRVRLQTADKTILLYSASDIEMLTADQLTTHPFLQRVGPDVLDARLTPEEVKARLLSPRFRNRQFSGLLLDQAFLAGLGNYLRVEILWQVGLTGQHKAKDLNEAQLNALSHALLDIPRLSYTTRGQADENKHHGALFRFKVFHRDGEACERCGGIIEKTTLSSRPFYWCPHCQK.

Catalysis depends on P2, which acts as the Schiff-base intermediate with DNA. E3 functions as the Proton donor in the catalytic mechanism. K53 serves as the catalytic Proton donor; for beta-elimination activity. The DNA site is built by Q70, R125, and N169. An FPG-type zinc finger spans residues 229–263 (KVFHRDGEACERCGGIIEKTTLSSRPFYWCPHCQK). The active-site Proton donor; for delta-elimination activity is the R253.

It belongs to the FPG family. The cofactor is Zn(2+).

It catalyses the reaction 2'-deoxyribonucleotide-(2'-deoxyribose 5'-phosphate)-2'-deoxyribonucleotide-DNA = a 3'-end 2'-deoxyribonucleotide-(2,3-dehydro-2,3-deoxyribose 5'-phosphate)-DNA + a 5'-end 5'-phospho-2'-deoxyribonucleoside-DNA + H(+). Its function is as follows. Involved in base excision repair of DNA damaged by oxidation or by mutagenic agents. Acts as a DNA glycosylase that recognizes and removes damaged bases. Has a preference for oxidized pyrimidines, such as thymine glycol, 5,6-dihydrouracil and 5,6-dihydrothymine. Has AP (apurinic/apyrimidinic) lyase activity and introduces nicks in the DNA strand. Cleaves the DNA backbone by beta-delta elimination to generate a single-strand break at the site of the removed base with both 3'- and 5'-phosphates. The sequence is that of Endonuclease 8 from Salmonella schwarzengrund (strain CVM19633).